A 553-amino-acid polypeptide reads, in one-letter code: Arginine--tRNA ligase (553 aa).

Residues alanine 123–arginine 133 carry the 'HIGH' region motif.

It belongs to the class-I aminoacyl-tRNA synthetase family. Monomer.

The protein resides in the cytoplasm. The catalysed reaction is tRNA(Arg) + L-arginine + ATP = L-arginyl-tRNA(Arg) + AMP + diphosphate. In Chlorobium phaeobacteroides (strain BS1), this protein is Arginine--tRNA ligase.